The chain runs to 103 residues: Putative membrane protein insertion efficiency factor (103 aa).

This sequence belongs to the UPF0161 family.

The protein resides in the cell inner membrane. Its function is as follows. Could be involved in insertion of integral membrane proteins into the membrane. This Chlamydia felis (strain Fe/C-56) (Chlamydophila felis) protein is Putative membrane protein insertion efficiency factor.